A 316-amino-acid chain; its full sequence is D-alanine--D-alanine ligase (316 aa).

The region spanning 108–310 is the ATP-grasp domain; it reads ERYEELSVVK…FDELVDLIIK (203 aa). ATP is bound at residue 138-193; the sequence is EEKIGLPCVVKPRKEGSSIGTHICFSKEELLDALKNEFKNYDEMIVQEYIKGKEIT. 3 residues coordinate Mg(2+): D265, E277, and N279.

The protein belongs to the D-alanine--D-alanine ligase family. Mg(2+) serves as cofactor. It depends on Mn(2+) as a cofactor.

The protein localises to the cytoplasm. It catalyses the reaction 2 D-alanine + ATP = D-alanyl-D-alanine + ADP + phosphate + H(+). Its pathway is cell wall biogenesis; peptidoglycan biosynthesis. In terms of biological role, cell wall formation. In Fervidobacterium nodosum (strain ATCC 35602 / DSM 5306 / Rt17-B1), this protein is D-alanine--D-alanine ligase.